The chain runs to 98 residues: Large ribosomal subunit protein uL23c (98 aa).

The protein belongs to the universal ribosomal protein uL23 family. In terms of assembly, part of the 50S ribosomal subunit.

Its subcellular location is the plastid. Functionally, binds to 23S rRNA. This chain is Large ribosomal subunit protein uL23c (rpl23), found in Euglena longa (Euglenophycean alga).